The sequence spans 59 residues: Large ribosomal subunit protein bL32 (59 aa).

This sequence belongs to the bacterial ribosomal protein bL32 family.

This Synechococcus sp. (strain RCC307) protein is Large ribosomal subunit protein bL32.